We begin with the raw amino-acid sequence, 424 residues long: Serine--tRNA ligase (424 aa).

231–233 serves as a coordination point for L-serine; sequence TAE. 262–264 contributes to the ATP binding site; the sequence is RSE. Glu-285 is an L-serine binding site. Residue 349–352 participates in ATP binding; it reads EISS. Residue Ser-385 participates in L-serine binding.

This sequence belongs to the class-II aminoacyl-tRNA synthetase family. Type-1 seryl-tRNA synthetase subfamily. As to quaternary structure, homodimer. The tRNA molecule binds across the dimer.

The protein resides in the cytoplasm. It catalyses the reaction tRNA(Ser) + L-serine + ATP = L-seryl-tRNA(Ser) + AMP + diphosphate + H(+). The enzyme catalyses tRNA(Sec) + L-serine + ATP = L-seryl-tRNA(Sec) + AMP + diphosphate + H(+). Its pathway is aminoacyl-tRNA biosynthesis; selenocysteinyl-tRNA(Sec) biosynthesis; L-seryl-tRNA(Sec) from L-serine and tRNA(Sec): step 1/1. In terms of biological role, catalyzes the attachment of serine to tRNA(Ser). Is also able to aminoacylate tRNA(Sec) with serine, to form the misacylated tRNA L-seryl-tRNA(Sec), which will be further converted into selenocysteinyl-tRNA(Sec). The polypeptide is Serine--tRNA ligase (Bacillus cytotoxicus (strain DSM 22905 / CIP 110041 / 391-98 / NVH 391-98)).